The chain runs to 423 residues: Protein CLP1 homolog (423 aa).

ATP contacts are provided by residues glutamate 16, lysine 57, and 119 to 124 (DVGKST).

This sequence belongs to the Clp1 family. Clp1 subfamily.

It localises to the nucleus. Functionally, required for endonucleolytic cleavage during polyadenylation-dependent pre-mRNA 3'-end formation. The polypeptide is Protein CLP1 homolog (cbc) (Drosophila sechellia (Fruit fly)).